The sequence spans 492 residues: E3 ubiquitin-protein ligase ARIH2 (492 aa).

Residues 1–11 are compositionally biased toward polar residues; the sequence is MSVDMNSQGSD. The interval 1–37 is disordered; the sequence is MSVDMNSQGSDSNEEDYDPNCEEEEEEEEDPGDIEDY. Over residues 12 to 36 the composition is skewed to acidic residues; it reads SNEEDYDPNCEEEEEEEEDPGDIED. Residues 64-111 form a UBA-like region; that stretch reads TYKESEGALHEHMTSLASVLKVSHSVAKLILVNFHWQVSEILDRYRSN. The TRIAD supradomain stretch occupies residues 134 to 343; that stretch reads PPHHCAVCMQ…SEYYECSRYK (210 aa). Positions 138, 141, 155, 157, 160, 163, 182, 187, 227, 232, 248, 251, 256, 259, 264, 269, 296, and 299 each coordinate Zn(2+). An RING-type 1 zinc finger spans residues 138–187; sequence CAVCMQFVRKENLLSLACQHQFCRSCWEQHCSVLVKDGVGVGISCMAQDC. Residues 207 to 269 form an IBR-type zinc finger; it reads DKYRRYLFRD…RQMYHAPTDC (63 aa). The segment at 296–325 adopts an RING-type 2; atypical zinc-finger fold; it reads CPKCNICIEKNGGCNHMQCSKCKHDFCWMC. Cys309 is a catalytic residue. The Zn(2+) site is built by Cys314, Cys317, Cys322, Cys325, His332, and Cys339. Residue Ser352 is modified to Phosphoserine. Positions 358-492 are ariadne domain; sequence REALKKYLFY…RTLLKDFHDT (135 aa).

The protein belongs to the RBR family. Ariadne subfamily. In terms of assembly, interacts (via RING-type zinc finger 1) with UBE2L3. Interacts (via RING-type zinc finger 2) with UBE2N. Interacts with neddylated CUL5. Interacts (via RING-type 2) with GFI1B. Interacts with GFI1; prevents its ubiquitination and proteasomal degradation. Interacts with DCUN1D1 (via UBA-like domain); promotes DCUN1D1 ubiquitination. Post-translationally, ubiquitinated. Ubiquitination promotes proteasomal degradation.

It localises to the nucleus. The protein resides in the cytoplasm. It catalyses the reaction [E2 ubiquitin-conjugating enzyme]-S-ubiquitinyl-L-cysteine + [acceptor protein]-L-lysine = [E2 ubiquitin-conjugating enzyme]-L-cysteine + [acceptor protein]-N(6)-ubiquitinyl-L-lysine.. It participates in protein modification; protein ubiquitination. Autoinhibited by the ariadne domain, which masks the second RING-type zinc finger that contains the active site and inhibits the E3 activity. Inhibition is relieved upon binding to neddylated cullin-RING ubiquitin ligase complexes, which activate the E3 ligase activity of ARIH1. E3 ubiquitin-protein ligase, which catalyzes ubiquitination of target proteins together with ubiquitin-conjugating enzyme E2 UBE2L3. Acts as an atypical E3 ubiquitin-protein ligase by working together with cullin-5-RING ubiquitin ligase complex (ECS complex, also named CRL5 complex) and initiating ubiquitination of ECS substrates: associates with ECS complex and specifically mediates addition of the first ubiquitin on ECS targets. The initial ubiquitin is then elongated. E3 ubiquitin-protein ligase activity is activated upon binding to neddylated form of the ECS complex. Mediates 'Lys-6', 'Lys-48'- and 'Lys-63'-linked polyubiquitination. May play a role in myelopoiesis. This chain is E3 ubiquitin-protein ligase ARIH2 (Arih2), found in Mus musculus (Mouse).